The primary structure comprises 122 residues: Piercer of microtubule wall 2 protein (122 aa).

Over residues 1–23 (MARETDCDLDKKTSLTSDAEMRP) the composition is skewed to basic and acidic residues. Disordered stretches follow at residues 1–26 (MARE…PEPP) and 99–122 (QNNS…QHTL). Positions 113-122 (IDSPNYQHTL) are enriched in polar residues.

It belongs to the PIERCE2 family. Microtubule inner protein component of sperm flagellar doublet microtubules. Interacts with CFAP53, ODAD1 and ODAD3; the interactions link the outer dynein arms docking complex (ODA-DC) to the internal microtubule inner proteins (MIP) in cilium axoneme.

Its subcellular location is the cytoplasm. It is found in the cytoskeleton. The protein resides in the cilium axoneme. The protein localises to the flagellum axoneme. Functionally, microtubule inner protein involved in the attachment of outer dynein arms (ODAs) to dynein-decorated doublet microtubules (DMTs) in cilia axoneme, which is required for motile cilia beating. This chain is Piercer of microtubule wall 2 protein, found in Mus musculus (Mouse).